The chain runs to 2116 residues: Unconventional myosin-VIIb (2116 aa).

Positions 65–760 constitute a Myosin motor domain; the sequence is QGVDDMIRLG…QDTLLEVQRS (696 aa). 158–165 provides a ligand contact to ATP; sequence GESGAGKT. Residues 637–659 are actin-binding; that stretch reads LDQLMKILTNCQPYFIRCIKPNE. IQ domains lie at 745–765, 763–792, 786–815, 814–834, 832–861, and 855–884; these read IFLRDHQDTLLEVQRSQVLDR, LDRAALSIQKVLRGYRYRKEFLRQRRAAVT, QRRAAVTLQAWWRGYCNRRNFKLILVGFER, ERLQAIARSQPLARQYQAMRQ, MRQRTVQLQALCRGYLVRQQVQAKRRAVVV, and KRRAVVVIQAHARGMAARRNFQQRKANAPL. S904 is modified (phosphoserine). A mediates interaction with ANKS4B region spans residues 916 to 1542; it reads EKVFGFLPAM…KKQGLLASEN (627 aa). The MyTH4 1 domain occupies 989–1192; sequence HIRRPLRYPL…PTWLELQAVK (204 aa). One can recognise an FERM 1 domain in the interval 1197-1506; sequence IPIQVILATG…EGLKERSIFA (310 aa). Phosphoserine is present on S1371. The SH3 domain maps to 1501–1567; sequence ERSIFAMALQ…PMACLYTIPT (67 aa). The tract at residues 1501-2116 is mediates interaction with CDHR2, CDHR5 and USH1C; that stretch reads ERSIFAMALQ…GSKAPALAST (616 aa). MyTH4 domains lie at 1644 to 1793 and 1790 to 1896; these read YSCE…EAAE and EAAE…KLWL. S1645 bears the Phosphoserine mark. One can recognise an FERM 2 domain in the interval 1799 to 2102; sequence ICHKIYFPND…SYVQQLLSAM (304 aa).

Belongs to the TRAFAC class myosin-kinesin ATPase superfamily. Myosin family. In terms of assembly, part of the IMAC/intermicrovillar adhesion complex/intermicrovillar tip-link complex composed of ANKS4B, MYO7B, USH1C, CDHR2 and CDHR5. Interacts with CDHR2. Interacts with CDHR5. Interacts with USH1C. Interacts with ANKS4B; requires initial interaction with USH1C. Interacts with CALML4; the interaction mediates the association of CALML4 with the IMAC/intermicrovillar adhesion complex.

It localises to the cytoplasm. The protein localises to the cytoskeleton. The protein resides in the cell projection. It is found in the microvillus. Functionally, myosins are actin-based motor molecules with ATPase activity. Their highly divergent tails are presumed to bind to membranous compartments, which would be moved relative to actin filaments. As part of the intermicrovillar adhesion complex/IMAC plays a role in epithelial brush border differentiation, controlling microvilli organization and length. May link the complex to the actin core bundle of microvilli. This chain is Unconventional myosin-VIIb, found in Homo sapiens (Human).